Consider the following 359-residue polypeptide: 3-dehydroquinate synthase (359 aa).

NAD(+) contacts are provided by residues 70–75 (DGEQYK), 105–109 (GVIGD), 129–130 (TT), K142, K151, and 169–172 (FYKT). 3 residues coordinate Zn(2+): E184, H247, and H264.

This sequence belongs to the sugar phosphate cyclases superfamily. Dehydroquinate synthase family. Co(2+) serves as cofactor. The cofactor is Zn(2+). It depends on NAD(+) as a cofactor.

It is found in the cytoplasm. It carries out the reaction 7-phospho-2-dehydro-3-deoxy-D-arabino-heptonate = 3-dehydroquinate + phosphate. It participates in metabolic intermediate biosynthesis; chorismate biosynthesis; chorismate from D-erythrose 4-phosphate and phosphoenolpyruvate: step 2/7. Functionally, catalyzes the conversion of 3-deoxy-D-arabino-heptulosonate 7-phosphate (DAHP) to dehydroquinate (DHQ). This Francisella tularensis subsp. tularensis (strain WY96-3418) protein is 3-dehydroquinate synthase.